We begin with the raw amino-acid sequence, 264 residues long: MLRLLRLALAFYGRTADPAERQGPQQQGLPQGDTQLTTVQGVVTSFCGDYGMIDESIYFSSDVVTGNVPLKVGQKVNVVVEEDKPHYGLRAIKVDVVPRHLYGAGPSDSGTRVLIGCVTSINEDNIYISNSIYFSIAIVSEDFVPYKGDLLEVEYSTEPGISNIKATSVKPIRCIHTEEVCITSVHGRNGVIDYTIFFTLDSVKLPDGYVPQVDDIVNVVMVESIQFCFIWRAISITPVHKSSSGFQDDGGLGRPKRERRSQSI.

The disordered stretch occupies residues 242–264; it reads SSSGFQDDGGLGRPKRERRSQSI. The span at 254 to 264 shows a compositional bias: basic residues; it reads RPKRERRSQSI.

Interacts with GABARAP; this interaction may be important for GABARAP protein stability. Isoform 1 interacts with LAMP2; this interaction may be important for LAMP2 protein stability. Testis-specific. Expressed in spermatozoa (at protein level).

Its subcellular location is the cytoplasm. It is found in the cytoplasmic vesicle. It localises to the secretory vesicle. The protein localises to the acrosome. The protein resides in the cell projection. Its subcellular location is the cilium. It is found in the flagellum. Functionally, plays a role in spermatogenesis, possibly acting in the regulation of the autophagy pathway. This chain is Cancer/testis antigen 55 (CT55), found in Homo sapiens (Human).